The primary structure comprises 244 residues: NH(3)-dependent NAD(+) synthetase (244 aa).

An ATP-binding site is contributed by 29-36; it reads GISGGIDS. Aspartate 35 provides a ligand contact to Mg(2+). A deamido-NAD(+)-binding site is contributed by arginine 113. ATP is bound at residue threonine 133. Glutamate 138 serves as a coordination point for Mg(2+). 2 residues coordinate deamido-NAD(+): lysine 146 and aspartate 153. ATP is bound by residues lysine 162 and threonine 184. Residue 230 to 231 coordinates deamido-NAD(+); sequence HK.

The protein belongs to the NAD synthetase family. Homodimer.

The catalysed reaction is deamido-NAD(+) + NH4(+) + ATP = AMP + diphosphate + NAD(+) + H(+). It participates in cofactor biosynthesis; NAD(+) biosynthesis; NAD(+) from deamido-NAD(+) (ammonia route): step 1/1. Catalyzes the ATP-dependent amidation of deamido-NAD to form NAD. Uses ammonia as a nitrogen source. The polypeptide is NH(3)-dependent NAD(+) synthetase (Mesoplasma florum (strain ATCC 33453 / NBRC 100688 / NCTC 11704 / L1) (Acholeplasma florum)).